The primary structure comprises 845 residues: Prickle-like protein 2 (845 aa).

One can recognise a PET domain in the interval Phe-18–Thr-126. Phosphoserine is present on Ser-92. 3 consecutive LIM zinc-binding domains span residues Ala-128–Pro-193, Pro-193–Glu-253, and Glu-253–Asn-317. Disordered stretches follow at residues Glu-314 to Lys-346 and Tyr-483 to Glu-546. Residues Gly-318 to Gln-327 are compositionally biased toward polar residues. Phosphoserine occurs at positions 319, 321, and 322. A phosphothreonine mark is found at Thr-535, Thr-537, and Thr-540. Residues Ser-544 and Ser-547 each carry the phosphoserine modification. Residues Ala-558–Gly-581 are disordered. Residues Ser-608 and Ser-643 each carry the phosphoserine modification. The segment at Gln-642–Leu-700 is disordered. Over residues Phe-683–Arg-693 the composition is skewed to basic residues. The residue at position 732 (Ser-732) is a Phosphoserine. The tract at residues Ser-823–Ser-845 is disordered. Cys-842 carries the cysteine methyl ester modification. A lipid anchor (S-farnesyl cysteine) is attached at Cys-842. Residues Ile-843–Ser-845 constitute a propeptide, removed in mature form.

The protein belongs to the prickle / espinas / testin family. Expressed in the hippocampus and cerebral cortex.

The protein localises to the nucleus membrane. This is Prickle-like protein 2 (Prickle2) from Mus musculus (Mouse).